Here is a 183-residue protein sequence, read N- to C-terminus: Dual specificity protein phosphatase 22-B (183 aa).

The Tyrosine-protein phosphatase domain occupies 4–144 (GINKVLPDLY…LQEFQTGELQ (141 aa)). The active-site Phosphocysteine intermediate is C88.

This sequence belongs to the protein-tyrosine phosphatase family. Non-receptor class dual specificity subfamily.

It is found in the cytoplasm. The protein localises to the nucleus. The enzyme catalyses O-phospho-L-tyrosyl-[protein] + H2O = L-tyrosyl-[protein] + phosphate. It catalyses the reaction O-phospho-L-seryl-[protein] + H2O = L-seryl-[protein] + phosphate. The catalysed reaction is O-phospho-L-threonyl-[protein] + H2O = L-threonyl-[protein] + phosphate. Functionally, activates the Jnk signaling pathway. Dephosphorylates and deactivates p38 and stress-activated protein kinase/c-Jun N-terminal kinase (SAPK/JNK). The polypeptide is Dual specificity protein phosphatase 22-B (dusp22b) (Danio rerio (Zebrafish)).